The following is a 519-amino-acid chain: MYLLPLPAAARVALRRLGVRGLWDRGLSTADMTKGLVLGIYSKDKDDDVPQFTSAGENFNKLVSGRLREMLNISGPPLKAGKTRTFYGLHQDFPSVVVVGLGKRSAGVDDQENWHEGKENIRAAVAAGCRQVQDLELPSVEVDPCGDAQAAAEGAVLGLYEYDDLKQKKKVAVSAKLHGSGDLEAWEKGVLFASGQNLARQLMESPANEMTPTRFAEVIEKNLKSASSKTEVHIRTKSWIEEQEMGSFLSVAKGSEEPPVFLEIHYTGSPNATEAPLVFVGKGITFDSGGISIKASANMDLMRADMGGAATICSAIVSAAKLNLPINIIGLAPLCENMPSGKANKPGDVVRARNGKTIQVDNTDAEGRLILADALCYAHTFNPKVIINAATLTGAMDVALGSGATGVFTNSSWLWNKLFEASVETGDRVWRMPLFEHYTRQVIDCQLADVNNLGKYRSAGACTAAAFLREFVTHTKWAHLDIAGVMTNKDEIPYLRKGMSGRPTRTLIEFLLRFSKDSS.

S42 is subject to Phosphoserine. K45 is modified (N6-succinyllysine). Residue S54 is modified to Phosphoserine. 2 positions are modified to N6-succinyllysine: K61 and K103. A phosphoserine mark is found at S180 and S194. Residues L202 and M203 each contribute to the Zn(2+) site. Residue K221 is modified to N6-acetyllysine; alternate. K221 is subject to N6-succinyllysine; alternate. At S238 the chain carries Phosphoserine. Residues K282 and D287 each coordinate Zn(2+). Residues K282, D287, S292, and K294 each contribute to the substrate site. Mg(2+) is bound at residue D287. K294 is an active-site residue. Zn(2+)-binding residues include R303, D305, D364, and E366. Residues D305 and D364 each contribute to the substrate site. Residues D364 and E366 each coordinate Mg(2+). R368 is an active-site residue. Residue K455 is modified to N6-acetyllysine; alternate. K455 is subject to N6-succinyllysine; alternate. Position 476 is an N6-succinyllysine (K476). Residue K489 is modified to N6-acetyllysine; alternate. Position 489 is an N6-succinyllysine; alternate (K489).

Belongs to the peptidase M17 family. As to quaternary structure, homohexamer. The cofactor is Zn(2+). Requires Mn(2+) as cofactor.

It localises to the cytoplasm. The enzyme catalyses Release of an N-terminal amino acid, Xaa-|-Yaa-, in which Xaa is preferably Leu, but may be other amino acids including Pro although not Arg or Lys, and Yaa may be Pro. Amino acid amides and methyl esters are also readily hydrolyzed, but rates on arylamides are exceedingly low.. It catalyses the reaction an S-substituted L-cysteinylglycine + H2O = an S-substituted L-cysteine + glycine. The catalysed reaction is L-cysteinylglycine + H2O = L-cysteine + glycine. It carries out the reaction S-benzyl-L-cysteinylglycine + H2O = S-benzyl-L-cysteine + glycine. The enzyme catalyses Release of N-terminal proline from a peptide.. With respect to regulation, bimane-S-cysteinylglycine-hydrolyzing activity is inhibited by o-phenanthroline or bestatin, and is activated by the addition of zinc chloride. Its function is as follows. Cytosolic metallopeptidase that catalyzes the removal of unsubstituted N-terminal hydrophobic amino acids from various peptides. The presence of Zn(2+) ions is essential for the peptidase activity, and the association with other cofactors can modulate the substrate spectificity of the enzyme. For instance, in the presence of Mn(2+), it displays a specific Cys-Gly hydrolyzing activity of Cys-Gly-S-conjugates. Involved in the metabolism of glutathione and in the degradation of glutathione S-conjugates, which may play a role in the control of the cell redox status. The polypeptide is Cytosol aminopeptidase (Rattus norvegicus (Rat)).